The following is a 166-amino-acid chain: UPF0251 protein UNCMA_27150 (166 aa).

The protein belongs to the UPF0251 family.

In Methanocella arvoryzae (strain DSM 22066 / NBRC 105507 / MRE50), this protein is UPF0251 protein UNCMA_27150.